A 63-amino-acid chain; its full sequence is KDGYPMRSDGCTIACLFDNDFCNRKCVEQKGKSGYCYFWKQSCYCEGLPDDKVYDSATSKCRA.

One can recognise an LCN-type CS-alpha/beta domain in the interval 1 to 62; it reads KDGYPMRSDG…VYDSATSKCR (62 aa). 4 disulfides stabilise this stretch: Cys-11–Cys-61, Cys-15–Cys-36, Cys-22–Cys-43, and Cys-26–Cys-45.

The protein belongs to the long (4 C-C) scorpion toxin superfamily. Sodium channel inhibitor family. Beta subfamily. As to expression, expressed by the venom gland.

The protein resides in the secreted. Beta toxins bind sodium channels (Nav) and shift the voltage of activation towards more negative potentials thereby affecting sodium channel activation and promoting spontaneous and repetitive firing. Only when tested on grasshopper mouse channels, this toxin inhibits Nav1.8/SCN10A sodium currents in a concentration and voltage-dependent manner (IC(50)=680 nM). This toxin hyperpolarizes the voltage dependence of Nav1.8/SCN10A activation, as well as steady-state fast inactivation and slow inactivation. In contrast to most beta scorpion toxins, this toxin inhibits grasshopper mouse Nav1.8/SCN10A currents through modulation of the domain I S4 voltage sensor, and the domain II second S5-S6 extracellular pore loop. This is Beta-toxin NaTx36 from Centruroides sculpturatus (Arizona bark scorpion).